The primary structure comprises 591 residues: Glutathione S-transferase T2 (591 aa).

Residues 1–82 (MKLKVYADRM…YLSSAYASVV (82 aa)) enclose the GST N-terminal domain. Glutathione is bound by residues 11–12 (SQ), 40–41 (QL), 53–54 (KV), and 66–67 (ES). Residues 89 to 226 (DLSKRAKIHS…EVLFRAKDRF (138 aa)) form the GST C-terminal domain. Residues 229-272 (QREMATASKPGPQSKIIQFSSIGGTSDGPNLVQDTTDRKARRRK) are disordered. A compositionally biased stretch (polar residues) spans 243–262 (KIIQFSSIGGTSDGPNLVQD). The region spanning 265–338 (DRKARRRKWS…HCRQRWRKIN (74 aa)) is the Myb-like domain.

This sequence belongs to the GST superfamily. Theta family.

It localises to the peroxisome. It carries out the reaction RX + glutathione = an S-substituted glutathione + a halide anion + H(+). Its function is as follows. May be involved in the conjugation of reduced glutathione to a wide number of exogenous and endogenous hydrophobic electrophiles and have a detoxification role against certain herbicides. The protein is Glutathione S-transferase T2 (GSTT2) of Arabidopsis thaliana (Mouse-ear cress).